A 100-amino-acid polypeptide reads, in one-letter code: Urease subunit gamma (100 aa).

It belongs to the urease gamma subunit family. In terms of assembly, heterotrimer of UreA (gamma), UreB (beta) and UreC (alpha) subunits. Three heterotrimers associate to form the active enzyme.

It localises to the cytoplasm. It carries out the reaction urea + 2 H2O + H(+) = hydrogencarbonate + 2 NH4(+). It participates in nitrogen metabolism; urea degradation; CO(2) and NH(3) from urea (urease route): step 1/1. This Bordetella pertussis (strain Tohama I / ATCC BAA-589 / NCTC 13251) protein is Urease subunit gamma.